The chain runs to 435 residues: UDP-N-acetylmuramate--L-alanine ligase (435 aa).

108–114 serves as a coordination point for ATP; it reads GAHGKST.

Belongs to the MurCDEF family.

Its subcellular location is the cytoplasm. It catalyses the reaction UDP-N-acetyl-alpha-D-muramate + L-alanine + ATP = UDP-N-acetyl-alpha-D-muramoyl-L-alanine + ADP + phosphate + H(+). The protein operates within cell wall biogenesis; peptidoglycan biosynthesis. Its function is as follows. Cell wall formation. The chain is UDP-N-acetylmuramate--L-alanine ligase from Campylobacter curvus (strain 525.92).